Reading from the N-terminus, the 605-residue chain is Probable Xaa-Pro aminopeptidase P (605 aa).

Mn(2+) contacts are provided by D402, D413, E511, and E525.

The protein belongs to the peptidase M24B family. Mn(2+) serves as cofactor.

It catalyses the reaction Release of any N-terminal amino acid, including proline, that is linked to proline, even from a dipeptide or tripeptide.. Functionally, catalyzes the removal of a penultimate prolyl residue from the N-termini of peptides. The protein is Probable Xaa-Pro aminopeptidase P (AMPP) of Leptosphaeria maculans (strain JN3 / isolate v23.1.3 / race Av1-4-5-6-7-8) (Blackleg fungus).